We begin with the raw amino-acid sequence, 426 residues long: MEKKAFFQQLDERTDIRYTDSGLKIFRLKFPRAHLRLCNVKIDFGSRDVCIRAESGDTLLPYGTAHFLEHLLFWHNGRNLYSDFFAHGALLNAFTTYTDTNFMFTSLPDRLRQTIPILLDALWNHSFDKKIVAQEKAVITSEIQTAHLNHQLSYHYQLISMLSPSSPAAVFPAGRIEDIEALDISDLQKAYKAAYQAHRMTLFLIGGSENTETLLPPHLQLEKRPDYHAERKIIPACPPVLSQKMMLGDEERMEDTWTGLQIGALPGQNDLLSIKLYWDIAARILFQLDSPFFQEIQQTYRLEIDRLSAETYIYEDGGFLILHSQGTHSSAYIDVASYYVTQKKEQVAAWLQYGKDSLTDAIIYDSDYVRKCFEWAAECDRCDCSFLDMYHIIQDMDAQVFLSLIDAMASSNKAIIHVSQKEAIRQ.

His-66 lines the Zn(2+) pocket. The active-site Proton acceptor is the Glu-69. 2 residues coordinate Zn(2+): His-70 and Glu-142.

It belongs to the peptidase M16 family. Requires Zn(2+) as cofactor.

Its function is as follows. Required for production of the bacteriocin subtilosin. Could catalyze some step in the processing of presubtilosin. The protein is Putative zinc protease AlbF (albF) of Bacillus subtilis (strain 168).